A 206-amino-acid polypeptide reads, in one-letter code: Ribonuclease HII (206 aa).

One can recognise an RNase H type-2 domain in the interval 14 to 206 (EFICGIDEVG…FKLRQLGEKV (193 aa)). Residues D20, E21, and D117 each coordinate a divalent metal cation.

Belongs to the RNase HII family. The cofactor is Mn(2+). Mg(2+) is required as a cofactor.

The protein localises to the cytoplasm. The enzyme catalyses Endonucleolytic cleavage to 5'-phosphomonoester.. Functionally, endonuclease that specifically degrades the RNA of RNA-DNA hybrids. The chain is Ribonuclease HII from Chlorobium chlorochromatii (strain CaD3).